The chain runs to 289 residues: YLVNPAAYAALGAYMFLLILIGFPINFLTLYVTLEHKKLRTPLNYILLNLAVANLFMVLGGFTTTMYTSMHGYFVLGRLGCNLEAFFATLGGEIALWSLVVLAIERWIVVCKPISNFRFTEDHAIMGLAFTWVMALACAVPPLVGWSRYIPEGMQCSCGVDYYTRAEGFNNESFVIYMFIVHFLIPLSVIFFCYGRLLCAVKEAPAAQQESETTQRAEKEVSRMVVIMVIGFLVCWLPYASVAWWIFCNQGSDFGPIFMTLPSFFAKSAAIYNPMIYICMNKQFRHCMI.

The Extracellular portion of the chain corresponds to 1–7 (YLVNPAA). The helical transmembrane segment at 8 to 32 (YAALGAYMFLLILIGFPINFLTLYV) threads the bilayer. At 33-44 (TLEHKKLRTPLN) the chain is on the cytoplasmic side. A helical transmembrane segment spans residues 45–67 (YILLNLAVANLFMVLGGFTTTMY). The Extracellular segment spans residues 68–81 (TSMHGYFVLGRLGC). A disulfide bridge connects residues C81 and C158. Residues 82–104 (NLEAFFATLGGEIALWSLVVLAI) traverse the membrane as a helical segment. The 'Ionic lock' involved in activated form stabilization motif lies at 105-107 (ERW). Residues 105-123 (ERWIVVCKPISNFRFTEDH) lie on the Cytoplasmic side of the membrane. A helical transmembrane segment spans residues 124-144 (AIMGLAFTWVMALACAVPPLV). Residues 145–173 (GWSRYIPEGMQCSCGVDYYTRAEGFNNES) lie on the Extracellular side of the membrane. N-linked (GlcNAc...) asparagine glycosylation is present at N171. A helical transmembrane segment spans residues 174–195 (FVIYMFIVHFLIPLSVIFFCYG). The Cytoplasmic segment spans residues 196-223 (RLLCAVKEAPAAQQESETTQRAEKEVSR). The chain crosses the membrane as a helical span at residues 224–245 (MVVIMVIGFLVCWLPYASVAWW). Residues 246–257 (IFCNQGSDFGPI) lie on the Extracellular side of the membrane. Residues 258–279 (FMTLPSFFAKSAAIYNPMIYIC) form a helical membrane-spanning segment. At K267 the chain carries N6-(retinylidene)lysine. Residues 280-289 (MNKQFRHCMI) lie on the Cytoplasmic side of the membrane.

This sequence belongs to the G-protein coupled receptor 1 family. Opsin subfamily. Phosphorylated on some or all of the serine and threonine residues present in the C-terminal region. In terms of processing, contains one covalently linked retinal chromophore.

It localises to the membrane. The protein resides in the cell projection. It is found in the cilium. Its subcellular location is the photoreceptor outer segment. Functionally, photoreceptor required for image-forming vision at low light intensity. While most salt water fish species use retinal as chromophore, most freshwater fish use 3-dehydroretinal, or a mixture of retinal and 3-dehydroretinal. Light-induced isomerization of 11-cis to all-trans retinal triggers a conformational change that activates signaling via G-proteins. Subsequent receptor phosphorylation mediates displacement of the bound G-protein alpha subunit by arrestin and terminates signaling. The polypeptide is Rhodopsin (rho) (Abyssocottus korotneffi (Baikalian deep-water sculpin)).